Here is a 166-residue protein sequence, read N- to C-terminus: Small ribosomal subunit protein uS5 (166 aa).

The S5 DRBM domain maps to 10–73; the sequence is QIEKLISLNR…TSARKNLRFV (64 aa).

Belongs to the universal ribosomal protein uS5 family. As to quaternary structure, part of the 30S ribosomal subunit. Contacts proteins S4 and S8.

Functionally, with S4 and S12 plays an important role in translational accuracy. In terms of biological role, located at the back of the 30S subunit body where it stabilizes the conformation of the head with respect to the body. The protein is Small ribosomal subunit protein uS5 of Borrelia garinii subsp. bavariensis (strain ATCC BAA-2496 / DSM 23469 / PBi) (Borreliella bavariensis).